Here is a 360-residue protein sequence, read N- to C-terminus: Archaemetzincin-2 (360 aa).

Residue H254 participates in Zn(2+) binding. E255 serves as the catalytic Proton acceptor. H258, H264, C265, C270, C289, and C292 together coordinate Zn(2+).

This sequence belongs to the peptidase M54 family. The cofactor is Zn(2+).

Probable zinc metalloprotease. The chain is Archaemetzincin-2 (AMZ2) from Macaca fascicularis (Crab-eating macaque).